A 511-amino-acid polypeptide reads, in one-letter code: Cobyric acid synthase (511 aa).

A GATase cobBQ-type domain is found at 251 to 443 (LLDIAIICLP…IHGIFDNDIF (193 aa)). Residue cysteine 332 is the Nucleophile of the active site. Residue histidine 435 is part of the active site.

The protein belongs to the CobB/CobQ family. CobQ subfamily.

Its pathway is cofactor biosynthesis; adenosylcobalamin biosynthesis. Functionally, catalyzes amidations at positions B, D, E, and G on adenosylcobyrinic A,C-diamide. NH(2) groups are provided by glutamine, and one molecule of ATP is hydrogenolyzed for each amidation. This Listeria innocua serovar 6a (strain ATCC BAA-680 / CLIP 11262) protein is Cobyric acid synthase.